A 517-amino-acid polypeptide reads, in one-letter code: Crotonobetaine/carnitine--CoA ligase (517 aa).

Belongs to the ATP-dependent AMP-binding enzyme family.

The enzyme catalyses 4-(trimethylamino)butanoate + ATP + CoA = 4-(trimethylamino)butanoyl-CoA + AMP + diphosphate. The catalysed reaction is crotonobetaine + ATP + CoA = crotonobetainyl-CoA + AMP + diphosphate. It carries out the reaction (R)-carnitine + ATP + CoA = (R)-carnitinyl-CoA + AMP + diphosphate. It functions in the pathway amine and polyamine metabolism; carnitine metabolism. Functionally, catalyzes the transfer of CoA to carnitine, generating the initial carnitinyl-CoA needed for the CaiB reaction cycle. Also has activity toward crotonobetaine and gamma-butyrobetaine. The sequence is that of Crotonobetaine/carnitine--CoA ligase from Escherichia coli O139:H28 (strain E24377A / ETEC).